A 73-amino-acid chain; its full sequence is ComX pheromone (73 aa).

The propeptide occupies 1–52; that stretch reads MKHIDKIISHLVNNPEAFDQFKNGNLTLLNINEKEKKAILYAFEQGEVPRTS. Tryptophan 54 is lipidated: 3'-farnesyl-2',N2-cyclotryptophan. The propeptide occupies 59–73; sequence AISNFFEDDKRKSLI.

In terms of assembly, interacts directly with the sensor histidine kinase ComP and stimulates its activity. Post-translationally, trp-54 is modified by farnesylation, which is essential for activity. Modified by the tryptophan prenyltransferase ComQ before export to the extracellular environment.

The protein resides in the secreted. Part of a major quorum-sensing system that regulates the development of genetic competence. Acts through the activation of the two-component regulatory system ComP/ComA composed of a sensor histidine kinase, ComP, and a response regulator, ComA. Activates the expression of the genes for biosynthesis of poly-gamma-glutamic acid (gamma-PGA), which is involved in biofilm formation in B.subtilis natto. This Bacillus subtilis subsp. natto (strain BEST195) protein is ComX pheromone.